The primary structure comprises 842 residues: Glucans biosynthesis glucosyltransferase H (842 aa).

Transmembrane regions (helical) follow at residues 140 to 160 (ILLL…KTIL), 194 to 214 (ILIL…TALM), 513 to 533 (VFLT…FLAL), 570 to 590 (LFAS…MLIW), 615 to 635 (VLLA…AFLG), 656 to 676 (FMRH…MAWL), and 680 to 700 (FLFW…VSVV).

This sequence belongs to the glycosyltransferase 2 family. OpgH subfamily.

Its subcellular location is the cell inner membrane. The protein operates within glycan metabolism; osmoregulated periplasmic glucan (OPG) biosynthesis. Functionally, involved in the biosynthesis of osmoregulated periplasmic glucans (OPGs). The protein is Glucans biosynthesis glucosyltransferase H of Citrobacter koseri (strain ATCC BAA-895 / CDC 4225-83 / SGSC4696).